The primary structure comprises 123 residues: MANPAHISAVRTLYKKILVLHRFLPIDLRALGDQYVKDEFRRHKTSSDEEAKHFMVEWQNYKDTLQTQVLEAMGNKKLVFGADLSEDKLKHFQDEQIGQLYELMLESTKPNRQFDIQEEGTPK.

A mitochondrion-targeting transit peptide spans 1–31 (MANPAHISAVRTLYKKILVLHRFLPIDLRAL).

The protein belongs to the complex I LYR family. SDHAF3 subfamily. As to quaternary structure, interacts with sdhb within an sdha-sdhb subcomplex.

It is found in the mitochondrion matrix. Functionally, plays an essential role in the assembly of succinate dehydrogenase (SDH), an enzyme complex (also referred to as respiratory complex II) that is a component of both the tricarboxylic acid (TCA) cycle and the mitochondrial electron transport chain, and which couples the oxidation of succinate to fumarate with the reduction of ubiquinone (coenzyme Q) to ubiquinol. Promotes maturation of the iron-sulfur protein subunit sdhb of the SDH catalytic dimer, protecting it from the deleterious effects of oxidants. May act together with SDHAF1. The polypeptide is Succinate dehydrogenase assembly factor 3, mitochondrial (Danio rerio (Zebrafish)).